Here is a 370-residue protein sequence, read N- to C-terminus: Natural killer cell receptor 2B4 (370 aa).

The signal sequence occupies residues 1-21; that stretch reads MLGQVVTLILLLLLKVYQGKG. Ig-like domains follow at residues 22 to 127 and 131 to 215; these read CQGS…FVFE and PDKV…LNLT. Residues 22–229 are Extracellular-facing; that stretch reads CQGSADHVVS…NAHQEFRFWP (208 aa). N-linked (GlcNAc...) asparagine glycosylation is found at asparagine 71, asparagine 77, asparagine 89, asparagine 164, asparagine 181, asparagine 192, asparagine 200, and asparagine 213. Cysteine 157 and cysteine 199 form a disulfide bridge. A helical transmembrane segment spans residues 230-250; it reads FLVIIVILSALFLGTLACFCV. Residues 251 to 370 are Cytoplasmic-facing; that stretch reads WRRKRKEKQS…KELENFDVYS (120 aa). 4 short sequence motifs (ITSM) span residues 269–274, 295–300, 315–320, and 340–345; these read TIYEDV, TIYSMI, TLYSLI, and TIYEVI. Tyrosine 271 is modified (phosphotyrosine). At tyrosine 297 the chain carries Phosphotyrosine; by FYN. Tyrosine 317 carries the phosphotyrosine modification. The tract at residues 324–370 is disordered; that stretch reads RKSGSRKRNHSPSFNSTIYEVIGKSQPKAQNPARLSRKELENFDVYS. At tyrosine 342 the chain carries Phosphotyrosine; by FYN.

Interacts with CD48. Interacts (via phosphorylated ITSM 1-4) with SH2D1A (via SH2 domain); SH2D1A probably mediates association with FYN. Interacts (via phosphorylated ITSM 3) with PTPN11/SHP-2, INPP5D/SHIP1, PTPN6/SHP-1 and CSK; binding of SH2D1A/SAP prevents association with PTPN11, PTPN6 and CSK; conflictingly a similar association has been described for phosphorylated ITSM 1 also including GRB2 and PLCG1. Interacts weakly (via phosphorylated ITSM 2) with PTPN11/SHP-2 and CSK. Interacts with SH2D1B. Interacts with PIK3R1; PI3K recruits SH2D1A. Interacts with MHC class I proteins; the interaction is proposed to prevent self-killing of NK cells. Post-translationally, N-linked glycosylation is essential for the binding to its ligand CD48. Also O-glycosylated, in contrast, O-linked sialylation has a negative impact on ligand binding. In terms of processing, phosphorylated by FYN and CSK on tyrosine residues following activation. Coligation with inhibitory receptors such as KIR2DL1 inhibits phosphorylation upon contact of NK cells with sensitive target cells. As to expression, expressed in spleen, PBL, followed by lung, liver, testis and small intestine. Expressed in all natural killer (NK) cells, monocytes and basophils, TCR-gamma/delta+ T-cells, monocytes, basophils, and on a subset of CD8(+) T-cells.

The protein resides in the membrane. The protein localises to the cell membrane. It is found in the membrane raft. Functionally, heterophilic receptor of the signaling lymphocytic activation molecule (SLAM) family; its ligand is CD48. SLAM receptors triggered by homo- or heterotypic cell-cell interactions are modulating the activation and differentiation of a wide variety of immune cells and thus are involved in the regulation and interconnection of both innate and adaptive immune response. Activities are controlled by presence or absence of small cytoplasmic adapter proteins, SH2D1A/SAP and/or SH2D1B/EAT-2. Acts as activating natural killer (NK) cell receptor. Activating function implicates association with SH2D1A and FYN. Downstreaming signaling involves predominantly VAV1, and, to a lesser degree, INPP5D/SHIP1 and CBL. Signal attenuation in the absence of SH2D1A is proposed to be dependent on INPP5D and to a lesser extent PTPN6/SHP-1 and PTPN11/SHP-2. Stimulates NK cell cytotoxicity, production of IFN-gamma and granule exocytosis. Optimal expansion and activation of NK cells seems to be dependent on the engagement of CD244 with CD48 expressed on neighboring NK cells. Acts as costimulator in NK activation by enhancing signals by other NK receptors such as NCR3 and NCR1. At early stages of NK cell differentiation may function as an inhibitory receptor possibly ensuring the self-tolerance of developing NK cells. Involved in the regulation of CD8(+) T-cell proliferation; expression on activated T-cells and binding to CD48 provides costimulatory-like function for neighboring T-cells. Inhibits inflammatory responses in dendritic cells (DCs). In Homo sapiens (Human), this protein is Natural killer cell receptor 2B4 (CD244).